The chain runs to 270 residues: Thymidylate synthase (270 aa).

DUMP contacts are provided by residues Arg-28 and 133 to 134 (RR). The active-site Nucleophile is the Cys-153. Residues 173–176 (RSAD), Asn-184, and 214–216 (HIY) each bind dUMP. Asp-176 lines the (6R)-5,10-methylene-5,6,7,8-tetrahydrofolate pocket. Ala-269 contacts (6R)-5,10-methylene-5,6,7,8-tetrahydrofolate.

It belongs to the thymidylate synthase family. Bacterial-type ThyA subfamily. As to quaternary structure, homodimer.

The protein resides in the cytoplasm. It carries out the reaction dUMP + (6R)-5,10-methylene-5,6,7,8-tetrahydrofolate = 7,8-dihydrofolate + dTMP. It functions in the pathway pyrimidine metabolism; dTTP biosynthesis. Its function is as follows. Catalyzes the reductive methylation of 2'-deoxyuridine-5'-monophosphate (dUMP) to 2'-deoxythymidine-5'-monophosphate (dTMP) while utilizing 5,10-methylenetetrahydrofolate (mTHF) as the methyl donor and reductant in the reaction, yielding dihydrofolate (DHF) as a by-product. This enzymatic reaction provides an intracellular de novo source of dTMP, an essential precursor for DNA biosynthesis. The chain is Thymidylate synthase from Corynebacterium diphtheriae (strain ATCC 700971 / NCTC 13129 / Biotype gravis).